The following is a 256-amino-acid chain: 5-keto-4-deoxy-D-glucarate aldolase (256 aa).

His-50 acts as the Proton acceptor in catalysis. Position 151 (Gln-151) interacts with substrate. Glu-153 contributes to the Mg(2+) binding site. 2 residues coordinate substrate: Ser-178 and Asp-179. Residue Asp-179 participates in Mg(2+) binding.

Belongs to the HpcH/HpaI aldolase family. KDGluc aldolase subfamily. As to quaternary structure, homohexamer; trimer of dimers. Mg(2+) serves as cofactor.

The enzyme catalyses 5-dehydro-4-deoxy-D-glucarate = 2-hydroxy-3-oxopropanoate + pyruvate. It carries out the reaction 2-dehydro-3-deoxy-D-glucarate = 2-hydroxy-3-oxopropanoate + pyruvate. It functions in the pathway carbohydrate acid metabolism; galactarate degradation; D-glycerate from galactarate: step 2/3. In terms of biological role, catalyzes the reversible retro-aldol cleavage of both 5-keto-4-deoxy-D-glucarate and 2-keto-3-deoxy-D-glucarate to pyruvate and tartronic semialdehyde. The polypeptide is 5-keto-4-deoxy-D-glucarate aldolase (Salmonella agona (strain SL483)).